The following is a 260-amino-acid chain: Cytochrome c oxidase subunit 3 (260 aa).

The next 7 helical transmembrane spans lie at 14 to 34 (PWPLTGAISALMMTSGLILWF), 41 to 61 (LLLAGTILLLLTVINWWRDVI), 81 to 101 (GMILFITSEVCFFFAFFWAFF), 126 to 146 (FLVPLLNTAVLLSSGVTVTWA), 158 to 178 (AIQGLFLTVILGIYFTGLQAW), 196 to 216 (FFVATGFHGLHVLIGTTFLFI), and 238 to 258 (AWYWHFVDVVWLFLYICICWW).

This sequence belongs to the cytochrome c oxidase subunit 3 family. Component of the cytochrome c oxidase (complex IV, CIV), a multisubunit enzyme composed of a catalytic core of 3 subunits and several supernumerary subunits. The complex exists as a monomer or a dimer and forms supercomplexes (SCs) in the inner mitochondrial membrane with ubiquinol-cytochrome c oxidoreductase (cytochrome b-c1 complex, complex III, CIII).

It is found in the mitochondrion inner membrane. It catalyses the reaction 4 Fe(II)-[cytochrome c] + O2 + 8 H(+)(in) = 4 Fe(III)-[cytochrome c] + 2 H2O + 4 H(+)(out). Component of the cytochrome c oxidase, the last enzyme in the mitochondrial electron transport chain which drives oxidative phosphorylation. The respiratory chain contains 3 multisubunit complexes succinate dehydrogenase (complex II, CII), ubiquinol-cytochrome c oxidoreductase (cytochrome b-c1 complex, complex III, CIII) and cytochrome c oxidase (complex IV, CIV), that cooperate to transfer electrons derived from NADH and succinate to molecular oxygen, creating an electrochemical gradient over the inner membrane that drives transmembrane transport and the ATP synthase. Cytochrome c oxidase is the component of the respiratory chain that catalyzes the reduction of oxygen to water. Electrons originating from reduced cytochrome c in the intermembrane space (IMS) are transferred via the dinuclear copper A center (CU(A)) of subunit 2 and heme A of subunit 1 to the active site in subunit 1, a binuclear center (BNC) formed by heme A3 and copper B (CU(B)). The BNC reduces molecular oxygen to 2 water molecules using 4 electrons from cytochrome c in the IMS and 4 protons from the mitochondrial matrix. This is Cytochrome c oxidase subunit 3 (COIII) from Patiria pectinifera (Starfish).